Consider the following 415-residue polypeptide: von Willebrand factor A domain-containing protein 1 (415 aa).

Residues 1 to 18 (MLFWTVLSMALSLRLALA) form the signal peptide. The VWFA domain occupies 34–213 (DLLFLLDSSA…ELRGAIIDAM (180 aa)). Residues S74, S80, and S93 each carry the phosphoserine modification. Fibronectin type-III domains are found at residues 214–305 (QPHQ…LQEE) and 307–405 (GPER…VPQA). N-linked (GlcNAc...) asparagine glycosylation is present at N264. C369 and C393 are oxidised to a cystine.

Homodimer or homomultimer; disulfide-linked. Interacts with HSPG2. In terms of processing, N-glycosylated.

Its subcellular location is the secreted. The protein localises to the extracellular space. It localises to the extracellular matrix. It is found in the basement membrane. In terms of biological role, promotes matrix assembly. Involved in the organization of skeletal muscles and in the formation of neuromuscular junctions. This chain is von Willebrand factor A domain-containing protein 1 (Vwa1), found in Rattus norvegicus (Rat).